A 359-amino-acid chain; its full sequence is Histidinol-phosphate aminotransferase (359 aa).

At lysine 217 the chain carries N6-(pyridoxal phosphate)lysine.

The protein belongs to the class-II pyridoxal-phosphate-dependent aminotransferase family. Histidinol-phosphate aminotransferase subfamily. As to quaternary structure, homodimer. Pyridoxal 5'-phosphate serves as cofactor.

It catalyses the reaction L-histidinol phosphate + 2-oxoglutarate = 3-(imidazol-4-yl)-2-oxopropyl phosphate + L-glutamate. Its pathway is amino-acid biosynthesis; L-histidine biosynthesis; L-histidine from 5-phospho-alpha-D-ribose 1-diphosphate: step 7/9. The sequence is that of Histidinol-phosphate aminotransferase from Salmonella heidelberg (strain SL476).